Reading from the N-terminus, the 269-residue chain is UPF0761 membrane protein HI_0276 (269 aa).

6 helical membrane passes run 32 to 52, 89 to 109, 128 to 148, 168 to 188, 203 to 223, and 232 to 252; these read MLAM…FPVF, MSAV…NNID, FAIY…SIGI, LLSF…YTVV, FLAA…IVTF, and AMAT…VVLV.

It belongs to the UPF0761 family.

The protein resides in the cell inner membrane. The protein is UPF0761 membrane protein HI_0276 of Haemophilus influenzae (strain ATCC 51907 / DSM 11121 / KW20 / Rd).